Here is a 103-residue protein sequence, read N- to C-terminus: Enhancer of rudimentary homolog (103 aa).

Belongs to the E(R) family. In terms of assembly, homodimer.

In terms of biological role, may have a role in the cell cycle. This is Enhancer of rudimentary homolog from Caenorhabditis elegans.